The sequence spans 118 residues: Beta-2-microglobulin (118 aa).

An N-terminal signal peptide occupies residues 1 to 20; the sequence is MARFVVLVLLGLLYLSHLDA. An Ig-like C1-type domain is found at 25–113; the sequence is PKVQVYSRHP…TTLSEPKVVK (89 aa). Cysteine 45 and cysteine 99 are disulfide-bonded.

Belongs to the beta-2-microglobulin family. Heterodimer of an alpha chain and a beta chain. Beta-2-microglobulin is the beta-chain of major histocompatibility complex class I molecules.

It localises to the secreted. Its function is as follows. Component of the class I major histocompatibility complex (MHC). Involved in the presentation of peptide antigens to the immune system. The polypeptide is Beta-2-microglobulin (B2M) (Felis catus (Cat)).